A 521-amino-acid polypeptide reads, in one-letter code: Amidase (521 aa).

Residues lysine 96 and serine 171 each act as charge relay system in the active site. A disordered region spans residues 155–174 (SGPVRNPWDRQREAGGSSGG). Serine 195 serves as the catalytic Acyl-ester intermediate.

The protein belongs to the amidase family. As to quaternary structure, homodimer.

It catalyses the reaction a monocarboxylic acid amide + H2O = a monocarboxylate + NH4(+). Functionally, hydrolyzes propionamides efficiently, and also at a lower efficiency, acetamide, acrylamide and indoleacetamide. This enzyme seems to be stereospecific and can lead to the production of a single enantiomer. This Rhodococcus erythropolis (Arthrobacter picolinophilus) protein is Amidase (amdA).